The sequence spans 276 residues: Orotidine 5'-phosphate decarboxylase (276 aa).

Lysine 96 (proton donor) is an active-site residue.

It belongs to the OMP decarboxylase family. Type 2 subfamily.

The enzyme catalyses orotidine 5'-phosphate + H(+) = UMP + CO2. Its pathway is pyrimidine metabolism; UMP biosynthesis via de novo pathway; UMP from orotate: step 2/2. The polypeptide is Orotidine 5'-phosphate decarboxylase (Porphyromonas gingivalis (strain ATCC 33277 / DSM 20709 / CIP 103683 / JCM 12257 / NCTC 11834 / 2561)).